The following is a 416-amino-acid chain: Serine hydroxymethyltransferase (416 aa).

(6S)-5,6,7,8-tetrahydrofolate contacts are provided by residues Leu121 and 125-127; that span reads GHL. At Lys229 the chain carries N6-(pyridoxal phosphate)lysine.

The protein belongs to the SHMT family. In terms of assembly, homodimer. The cofactor is pyridoxal 5'-phosphate.

It is found in the cytoplasm. It carries out the reaction (6R)-5,10-methylene-5,6,7,8-tetrahydrofolate + glycine + H2O = (6S)-5,6,7,8-tetrahydrofolate + L-serine. Its pathway is one-carbon metabolism; tetrahydrofolate interconversion. It participates in amino-acid biosynthesis; glycine biosynthesis; glycine from L-serine: step 1/1. Its function is as follows. Catalyzes the reversible interconversion of serine and glycine with tetrahydrofolate (THF) serving as the one-carbon carrier. This reaction serves as the major source of one-carbon groups required for the biosynthesis of purines, thymidylate, methionine, and other important biomolecules. Also exhibits THF-independent aldolase activity toward beta-hydroxyamino acids, producing glycine and aldehydes, via a retro-aldol mechanism. This chain is Serine hydroxymethyltransferase, found in Neisseria meningitidis serogroup A / serotype 4A (strain DSM 15465 / Z2491).